The sequence spans 412 residues: Argininosuccinate synthase (412 aa).

ATP-binding positions include 11–19 (AYSGGLDTS) and Ala37. Positions 88 and 93 each coordinate L-citrulline. ATP is bound at residue 116–124 (SHGATGKGN). Residues Thr120, Asn124, and Asp125 each coordinate L-aspartate. Asn124 serves as a coordination point for L-citrulline. The L-citrulline site is built by Arg128, Ser181, Ser190, Glu271, and Tyr283.

The protein belongs to the argininosuccinate synthase family. As to quaternary structure, homotetramer.

The protein localises to the cytoplasm. The protein resides in the cytosol. It catalyses the reaction L-citrulline + L-aspartate + ATP = 2-(N(omega)-L-arginino)succinate + AMP + diphosphate + H(+). It functions in the pathway amino-acid biosynthesis; L-arginine biosynthesis; L-arginine from L-ornithine and carbamoyl phosphate: step 2/3. The protein operates within nitrogen metabolism; urea cycle; (N(omega)-L-arginino)succinate from L-aspartate and L-citrulline: step 1/1. Functionally, one of the enzymes of the urea cycle, the metabolic pathway transforming neurotoxic amonia produced by protein catabolism into inocuous urea in the liver of ureotelic animals. Catalyzes the formation of arginosuccinate from aspartate, citrulline and ATP and together with ASL it is responsible for the biosynthesis of arginine in most body tissues. The polypeptide is Argininosuccinate synthase (Xenopus tropicalis (Western clawed frog)).